The sequence spans 1328 residues: DNA-directed RNA polymerase subunit beta (1328 aa).

Belongs to the RNA polymerase beta chain family. In terms of assembly, the RNAP catalytic core consists of 2 alpha, 1 beta, 1 beta' and 1 omega subunit. When a sigma factor is associated with the core the holoenzyme is formed, which can initiate transcription.

The enzyme catalyses RNA(n) + a ribonucleoside 5'-triphosphate = RNA(n+1) + diphosphate. Its function is as follows. DNA-dependent RNA polymerase catalyzes the transcription of DNA into RNA using the four ribonucleoside triphosphates as substrates. The sequence is that of DNA-directed RNA polymerase subunit beta from Karelsulcia muelleri (strain GWSS) (Sulcia muelleri).